A 503-amino-acid chain; its full sequence is Putative (R)-citramalate synthase CimA (503 aa).

In terms of domain architecture, Pyruvate carboxyltransferase spans 9-257; sequence IRFFDTTLRD…DTGIATEELY (249 aa).

The protein belongs to the alpha-IPM synthase/homocitrate synthase family. As to quaternary structure, homodimer.

The catalysed reaction is pyruvate + acetyl-CoA + H2O = (3R)-citramalate + CoA + H(+). The protein operates within amino-acid biosynthesis; L-isoleucine biosynthesis; 2-oxobutanoate from pyruvate: step 1/3. Functionally, catalyzes the condensation of pyruvate and acetyl-coenzyme A to form (R)-citramalate. In Methanoculleus marisnigri (strain ATCC 35101 / DSM 1498 / JR1), this protein is Putative (R)-citramalate synthase CimA.